A 2820-amino-acid polypeptide reads, in one-letter code: Neurofibromin (2820 aa).

Residue alanine 2 is modified to N-acetylalanine. Phosphoserine occurs at positions 866 and 878. The Ras-GAP domain occupies 1253–1463 (HLLYQLLWNM…DLARRFFLDI (211 aa)). In terms of domain architecture, CRAL-TRIO spans 1561 to 1719 (EKEEFKALKT…ATLALEEDLK (159 aa)). The lipid binding stretch occupies residues 1561-1818 (EKEEFKALKT…RTRWELSQPD (258 aa)). Phosphoserine occurs at positions 2169 and 2448. A disordered region spans residues 2457–2482 (YPIHHGDPSSRTLKETQPWSSPRGSE). The segment covering 2458-2470 (PIHHGDPSSRTLK) has biased composition (basic and acidic residues). Threonine 2495 is modified (phosphothreonine). 4 positions are modified to phosphoserine: serine 2496, serine 2502, serine 2504, and serine 2524. Positions 2536–2552 (KRQEMESGITTPPKMRR) match the Bipartite nuclear localization signal motif. A Phosphothreonine modification is found at threonine 2546. Residues serine 2578, serine 2783, and serine 2798 each carry the phosphoserine modification. The disordered stretch occupies residues 2768–2820 (TSQHSPGIDKENVELSPTTGHCNSGRTRHGSASQVQKQRSAGSFKRNSIKKIV). The segment covering 2782–2808 (LSPTTGHCNSGRTRHGSASQVQKQRSA) has biased composition (polar residues).

Interacts with HTR6. Interacts with SPRED2. Ubiquitinated by RNF7/RBX2, leading to its degradation.

It is found in the nucleus. The protein localises to the nucleolus. Its subcellular location is the cell membrane. Its function is as follows. Stimulates the GTPase activity of Ras. NF1 shows greater affinity for Ras GAP, but lower specific activity. May be a regulator of Ras activity. The sequence is that of Neurofibromin (Nf1) from Rattus norvegicus (Rat).